Reading from the N-terminus, the 155-residue chain is Small ribosomal subunit protein uS15 (155 aa).

Residues Met1–Gly10 show a composition bias toward basic residues. A disordered region spans residues Met1–Asp66. The span at Glu21–Ile33 shows a compositional bias: acidic residues. Basic and acidic residues predominate over residues Glu34 to His45.

The protein belongs to the universal ribosomal protein uS15 family. Part of the 30S ribosomal subunit.

In Halobacterium salinarum (strain ATCC 700922 / JCM 11081 / NRC-1) (Halobacterium halobium), this protein is Small ribosomal subunit protein uS15.